Here is a 137-residue protein sequence, read N- to C-terminus: Peptide methionine sulfoxide reductase MsrB (137 aa).

Positions 7–129 (AEELKKKLSE…NSASLAFSDE (123 aa)) constitute a MsrB domain. Positions 46, 49, 95, and 98 each coordinate Zn(2+). Residue C118 is the Nucleophile of the active site.

This sequence belongs to the MsrB Met sulfoxide reductase family. Zn(2+) is required as a cofactor.

It catalyses the reaction L-methionyl-[protein] + [thioredoxin]-disulfide + H2O = L-methionyl-(R)-S-oxide-[protein] + [thioredoxin]-dithiol. The polypeptide is Peptide methionine sulfoxide reductase MsrB (Salmonella dublin (strain CT_02021853)).